Reading from the N-terminus, the 404-residue chain is Aspergillopepsin-1 (404 aa).

Residues 1–20 form the signal peptide; sequence MVILSKVAAVAVGLSTVASA. A propeptide spans 21-77 (activation peptide); that stretch reads LPTGPSHSPHARRGFTINQITRQTARVGPKTASFPAIYSRALAKYGGTVPAHLKSAV. One can recognise a Peptidase A1 domain in the interval 95–401; sequence YLTPVNIGGT…DSQGPRLGFA (307 aa). D111 is an active-site residue. N140 carries an N-linked (GlcNAc...) asparagine glycan. Residue D293 is part of the active site. A disulfide bridge links C329 with C364.

The protein belongs to the peptidase A1 family. Monomer.

It localises to the secreted. The catalysed reaction is Hydrolysis of proteins with broad specificity. Generally favors hydrophobic residues in P1 and P1', but also accepts Lys in P1, which leads to activation of trypsinogen. Does not clot milk.. In terms of biological role, secreted aspartic endopeptidase that allows assimilation of proteinaceous substrates. The scissile peptide bond is attacked by a nucleophilic water molecule activated by two aspartic residues in the active site. Shows a broad primary substrate specificity. Favors hydrophobic residues at the P1 and P1' positions, but also accepts a lysine residue in the P1 position, leading to the activation of trypsinogen and chymotrypsinogen A. The protein is Aspergillopepsin-1 (pepA) of Aspergillus flavus (strain ATCC 200026 / FGSC A1120 / IAM 13836 / NRRL 3357 / JCM 12722 / SRRC 167).